The sequence spans 1076 residues: Cytadherence high molecular weight protein 3 (1076 aa).

The interval 264 to 284 is fibronectin-binding; that stretch reads QGYDQGYDQQYDQQGYDQQGY. Low complexity predominate over residues 326-335; that stretch reads QQPVEVAKPA. Positions 326–351 are disordered; it reads QQPVEVAKPAPTKPVGPKPQPGKKAT. Positions 336–345 are enriched in pro residues; it reads PTKPVGPKPQ. Residues 562 to 616 are a coiled coil; the sequence is EITKLEELVEIKTDNTESLNKLETLIDENKKIIDQFKQLKEEAKKSNSNINLEKV. 2 disordered regions span residues 789 to 808 and 850 to 873; these read SREHEQVQPKAQHQQPTTRI and RINPQDSYYDQGYEQPDPYQEQQP. A compositionally biased stretch (polar residues) spans 797–806; that stretch reads PKAQHQQPTT. Positions 862–873 are enriched in low complexity; the sequence is YEQPDPYQEQQP.

It localises to the cell projection. Its subcellular location is the attachment organelle membrane. In terms of biological role, binds immobilized fibronectin. Its function is as follows. Component of the cytoskeleton-like structure which stabilizes the shape of the wall-less mycoplasma. This cytoskeleton-like network of accessory proteins containing HMW proteins 1 to 5 allows the proper anchoring of cytadhesin proteins in the mycoplasmal membrane at the attachment organelle. Essential for successful surface parasitism. This chain is Cytadherence high molecular weight protein 3 (hlp3), found in Mycoplasmoides gallisepticum (strain R(low / passage 15 / clone 2)) (Mycoplasma gallisepticum).